Here is an 811-residue protein sequence, read N- to C-terminus: MPNQGEDCYFFFFYSTCTKGDSCPFRHCEAALGNETVCTLWQEGRCFRQVCRFRHMEIDKKRSEIPCYWENQPTGCQKLNCAFHHNRGRYVDGLFLPPSKTVLPTVPESPEEEVKASQLSVQQNKLSVQSNPSPQLRSVMKVESSENVPSPTHPPVVINAADDDEDDDDQFSEEGDETKTPTLQPTPEVHNGLRVTSVRKPAVNIKQGECLNFGIKTLEEIKSKKMKEKSKKQGEGSSGVSSLLLHPEPVPGPEKENVRTVVRTVTLSTKQGEEPLVRLSLTERLGKRKFSAGGDSDPPLKRSLAQRLGKKVEAPEANIDKTPKRAQVSKSLKERLGMSADPNNEDATEKVNKVGEIHVKTLEEILLERASQKRGELQTKLKTEGPSKTDDSTSGARSSSTIRIKTFSEVLAEKKHRQQEAERQKSKKDTTCIKLKTDSEIKKTVVLPPIVASKGQSEEPAGKTKSMQEVHIKTLEEIKLEKALRVQQSSESSTSSPSQHEATPGARRLLRIAKRTGMKEEKNLQEGNEVDSQSSIRTEAKEASGETTGVDITNIQVKRCETMREKHMQKQQEREKSVLTPLRGDVASCNTQVAEKPVLTAVPGITRHLTKRLPTKSSQKVEVEISGIGDSVLNVKYAAQTLEKRGKAKPKVNVKPSVVKVVSSPKLAPKRKAVEMHPAVIAAVKPLSSSSVLQEPPAKKAAVAVVPLVSEDKSVTVPEAENPRDSLVLPPTQSSSDSSPPEVSGPSSSQMSMKTRRLSSASTGKPQLSVEDDFEKLIWEISGGKLEAEIDLDPGKDEDDLLLELSEMIDS.

3 C3H1-type zinc fingers span residues Pro-2–Ala-30, Leu-32–Ile-58, and Lys-61–Arg-87. The residue at position 109 (Ser-109) is a Phosphoserine. Residues Lys-115 and Lys-125 each participate in a glycyl lysine isopeptide (Lys-Gly) (interchain with G-Cter in SUMO2) cross-link. Position 133 is a phosphoserine (Ser-133). Disordered stretches follow at residues Met-140 to Val-195, Lys-224 to Val-258, Gly-286 to Asn-352, and Glu-368 to Lys-434. Lys-141 is covalently cross-linked (Glycyl lysine isopeptide (Lys-Gly) (interchain with G-Cter in SUMO2)). Phosphoserine is present on residues Ser-150 and Ser-172. Residues Ala-161–Asp-176 are compositionally biased toward acidic residues. A Phosphoserine modification is found at Ser-291. Composition is skewed to basic and acidic residues over residues Lys-310 to Pro-323 and Glu-368 to Asp-391. Thr-322 is modified (phosphothreonine). Residues Glu-363–Gln-424 adopt a coiled-coil conformation. The residue at position 371 (Ser-371) is a Phosphoserine. A compositionally biased stretch (polar residues) spans Ser-392–Arg-403. A compositionally biased stretch (basic and acidic residues) spans Gln-418–Lys-434. A Glycyl lysine isopeptide (Lys-Gly) (interchain with G-Cter in SUMO2) cross-link involves residue Lys-479. The disordered stretch occupies residues Ala-483 to Val-550. Over residues Gln-487–Gln-499 the composition is skewed to low complexity. A Glycyl lysine isopeptide (Lys-Gly) (interchain with G-Cter in SUMO2) cross-link involves residue Lys-620. Positions Thr-716–Ser-769 are disordered. A compositionally biased stretch (low complexity) spans Pro-730–Ser-749. Over residues Gln-750–Pro-766 the composition is skewed to polar residues.

As to quaternary structure, interacts with TREX complex components THOC2, DDX39 and POLDIP3; the interactions are ATP-dependent. Interacts with PABPN1; this interaction retains ZC3H11A in nuclear speckles. Interacts with KPNA3.

It is found in the nucleus speckle. Functionally, through its association with TREX complex components, may participate in the export and post-transcriptional coordination of selected mRNA transcripts, including those required to maintain the metabolic processes in embryonic cells. Binds RNA. This Pongo abelii (Sumatran orangutan) protein is Zinc finger CCCH domain-containing protein 11A (ZC3H11A).